The following is a 401-amino-acid chain: MSPAHGNRLGTPESPNATTLLLLGSGELGKEVVLAAQRLGIETVAVDRYEHAPAMQVAHRDYIIDMTDATALREVVQQEDPTIIIPEIEAIATDELKRLETQGYDVVPTAQATRLTMDREWIREFAAEEVGVTTNEYAFADNYDTYRKAVEDIGIPVVVKPTMSSSGKGQSIVRESAEINGAWETARAGSRSDTGRVIIEELVEFDSEFTLLTVRHADGTTFCPPVGHTQQDGDYRTSWQPHSLTTEQRTTAQQMAQKVTDGLGGYGIFGVEFFVQDGTVIFSELSPRPHDTGLVTLSSQRLSQFDLHLRAILGLPIPDIDVERPGASAALVVDEPLTRPAFTGVDEALSMSDVDIRLFGKPEAYPGRRMGAAVATAIDIETAQERASEAVDCIHVSDDKT.

N(1)-(5-phospho-beta-D-ribosyl)glycinamide is bound by residues 27–28 and E87; that span reads EL. Residues R119, K160, 165–170, 200–203, and E208 each bind ATP; these read SSGKGQ and EELV. Residues 124-313 enclose the ATP-grasp domain; that stretch reads EFAAEEVGVT…QFDLHLRAIL (190 aa). Positions 272 and 284 each coordinate Mg(2+). Residues D291, K361, and 368 to 369 contribute to the N(1)-(5-phospho-beta-D-ribosyl)glycinamide site; that span reads RR.

This sequence belongs to the PurK/PurT family. As to quaternary structure, homodimer.

The catalysed reaction is N(1)-(5-phospho-beta-D-ribosyl)glycinamide + formate + ATP = N(2)-formyl-N(1)-(5-phospho-beta-D-ribosyl)glycinamide + ADP + phosphate + H(+). It functions in the pathway purine metabolism; IMP biosynthesis via de novo pathway; N(2)-formyl-N(1)-(5-phospho-D-ribosyl)glycinamide from N(1)-(5-phospho-D-ribosyl)glycinamide (formate route): step 1/1. Functionally, involved in the de novo purine biosynthesis. Catalyzes the transfer of formate to 5-phospho-ribosyl-glycinamide (GAR), producing 5-phospho-ribosyl-N-formylglycinamide (FGAR). Formate is provided by PurU via hydrolysis of 10-formyl-tetrahydrofolate. This Haloquadratum walsbyi (strain DSM 16790 / HBSQ001) protein is Formate-dependent phosphoribosylglycinamide formyltransferase.